The following is a 448-amino-acid chain: Phosphoglucosamine mutase (448 aa).

The active-site Phosphoserine intermediate is Ser-100. Positions 100, 240, 242, and 244 each coordinate Mg(2+). The residue at position 100 (Ser-100) is a Phosphoserine.

This sequence belongs to the phosphohexose mutase family. The cofactor is Mg(2+). In terms of processing, activated by phosphorylation.

It catalyses the reaction alpha-D-glucosamine 1-phosphate = D-glucosamine 6-phosphate. Catalyzes the conversion of glucosamine-6-phosphate to glucosamine-1-phosphate. This Bacillus pumilus (strain SAFR-032) protein is Phosphoglucosamine mutase.